The following is a 1506-amino-acid chain: DDB1- and CUL4-associated factor 1 (1506 aa).

Residues 141-499 (QPLRTYSTGL…STLEILNLED (359 aa)) form a protein kinase-like region. A phosphoserine mark is found at S202 and S254. Residues 241–275 (RLDSSHKTSSRVNSATKPEEGGLKKNKSAKHGDRE) are disordered. Residues 561-592 (SYTHEQIVEMMEFLIEYGPAQLYWEPAEVFLK) form the Chromo domain. K700 bears the N6-acetyllysine mark. At S827 the chain carries Phosphoserine. The LisH domain maps to 845–877 (PEKELLLLIRNHLISKGLGETATVLTREADLPM). T887 carries the phosphothreonine modification. S894 and S897 each carry phosphoserine. Disordered regions lie at residues 916 to 946 (ATVG…GPSY) and 977 to 999 (KSDH…HLPS). Pro residues predominate over residues 924 to 943 (SAPPAHPPPRPPQGSLPLPG). Phosphoserine is present on residues S978 and S999. WD repeat units follow at residues 1090–1129 (EDES…EEAS), 1132–1173 (CHNS…DMKH), 1175–1212 (FTED…KLLT), 1214–1246 (FNPD…WDVR), and 1247–1289 (SAQA…LLHT). Residues 1090-1289 (EDESGFTCCA…DLRTFHLLHT (200 aa)) form a WD repeat-like region region. 2 consecutive short sequence motifs (DWD box) follow at residues 1241-1248 (VLWDVRSA) and 1277-1284 (EIWDLRTF). S1327 is subject to Phosphoserine. A disordered region spans residues 1392–1506 (RLAEDEDEEE…EDDIILSLNE (115 aa)). 2 stretches are compositionally biased toward acidic residues: residues 1395–1482 (EDED…EEVE) and 1489–1500 (DSSDNSDLEDDI). The segment at 1417–1506 (DDDTDDLDEL…EDDIILSLNE (90 aa)) is interaction with NF2.

This sequence belongs to the VPRBP/DCAF1 family. In terms of assembly, component of the DCX (DDB1-CUL4-X-box) E3 ubiquitin-protein ligase complex, named CUL4A-RBX1-DDB1-DCAF1/VPRBP complex. Interacts with DDB1; the interaction is direct. Also forms a ternary complex with DDA1 and DDB1. Interacts with NF2 (via FERM domain). Component of the EDVP complex, a E3 ligase complex containing DYRK2, EDD/UBR5, DDB1 and DCAF1. Interacts with DYRK2; the interaction is direct. Interacts with RAG1; the interaction is direct. Interacts with LLGL1 and LLGL2. Interacts with histone H3. Interacts with ESR1 and LATS1; probably recruited by LATS1 to promote ESR1 ubiquitination and ubiquitin-mediated proteasomal degradation. Directly interacts with TET1, TET2 and TET3 (via C-terminus). Interacts with CEP78; promoting DCAF1 localization to centrosomes. As to expression, widely expressed. Expressed in oocytes and zygotes (at protein level).

The protein resides in the cytoplasm. Its subcellular location is the nucleus. The protein localises to the cytoskeleton. It localises to the microtubule organizing center. It is found in the centrosome. The enzyme catalyses L-seryl-[protein] + ATP = O-phospho-L-seryl-[protein] + ADP + H(+). It carries out the reaction L-threonyl-[protein] + ATP = O-phospho-L-threonyl-[protein] + ADP + H(+). The protein operates within protein modification; protein ubiquitination. In terms of biological role, acts both as a substrate recognition component of E3 ubiquitin-protein ligase complexes and as an atypical serine/threonine-protein kinase, playing key roles in various processes such as cell cycle, telomerase regulation and histone modification. Probable substrate-specific adapter of a DCX (DDB1-CUL4-X-box) E3 ubiquitin-protein ligase complex, named CUL4A-RBX1-DDB1-DCAF1/VPRBP complex, which mediates ubiquitination and proteasome-dependent degradation of proteins such as NF2. Involved in the turnover of methylated proteins: recognizes and binds methylated proteins via its chromo domain, leading to ubiquitination of target proteins by the RBX1-DDB1-DCAF1/VPRBP complex. The CUL4A-RBX1-DDB1-DCAF1/VPRBP complex is also involved in B-cell development: DCAF1 is recruited by RAG1 to ubiquitinate proteins, leading to limit error-prone repair during V(D)J recombination. Also part of the EDVP complex, an E3 ligase complex that mediates ubiquitination of proteins such as TERT, leading to TERT degradation and telomerase inhibition. The EDVP complex also mediates ubiquitination and degradation of CCP110. Also acts as an atypical serine/threonine-protein kinase that specifically mediates phosphorylation of 'Thr-120' of histone H2A (H2AT120ph) in a nucleosomal context, thereby repressing transcription. H2AT120ph is present in the regulatory region of many tumor suppresor genes, down-regulates their transcription and is present at high level in a number of tumors. Involved in JNK-mediated apoptosis during cell competition process via its interaction with LLGL1 and LLGL2. By acting on TET dioxygenses, essential for oocyte maintenance at the primordial follicle stage, hence essential for female fertility. In Mus musculus (Mouse), this protein is DDB1- and CUL4-associated factor 1.